A 332-amino-acid polypeptide reads, in one-letter code: T-cell surface glycoprotein CD1c1 (332 aa).

Residues M1–I17 form the signal peptide. The Extracellular portion of the chain corresponds to T18–S300. N25, N38, N75, and N146 each carry an N-linked (GlcNAc...) asparagine glycan. 2 disulfide bridges follow: C120–C184 and C224–C279. In terms of domain architecture, Ig-like spans P205–I292. Residues V301 to L321 form a helical membrane-spanning segment. Residues Y322 to Q332 are Cytoplasmic-facing.

Heterodimer with B2M (beta-2-microglobulin).

It localises to the cell membrane. The protein localises to the endosome membrane. Antigen-presenting protein that binds self and non-self lipid and glycolipid antigens and presents them to T-cell receptors on natural killer T-cells. The sequence is that of T-cell surface glycoprotein CD1c1 (CD1C1) from Cavia porcellus (Guinea pig).